The sequence spans 122 residues: Large ribosomal subunit protein uL14 (122 aa).

Belongs to the universal ribosomal protein uL14 family. In terms of assembly, part of the 50S ribosomal subunit. Forms a cluster with proteins L3 and L19. In the 70S ribosome, L14 and L19 interact and together make contacts with the 16S rRNA in bridges B5 and B8.

Binds to 23S rRNA. Forms part of two intersubunit bridges in the 70S ribosome. This Symbiobacterium thermophilum (strain DSM 24528 / JCM 14929 / IAM 14863 / T) protein is Large ribosomal subunit protein uL14.